Reading from the N-terminus, the 206-residue chain is Probable thymidylate kinase (206 aa).

ATP is bound at residue 10–17 (GIDGSGKS).

The protein belongs to the thymidylate kinase family.

The enzyme catalyses dTMP + ATP = dTDP + ADP. The protein is Probable thymidylate kinase of Methanosarcina acetivorans (strain ATCC 35395 / DSM 2834 / JCM 12185 / C2A).